The primary structure comprises 219 residues: Mediator of RNA polymerase II transcription subunit 18 (219 aa).

Belongs to the Mediator complex subunit 18 family. In terms of assembly, component of the Mediator complex. Interacts with YY1 to suppress disease susceptibility via the repression of genes glutaredoxins GRX480, GRXS13 and thioredoxin TRX-h5. Binds to ABI4 to regulate abscisic acid responses; recruited by ABI4 to ABI5 promoter in the presence of abscisic acid (ABA). Interacts with SUF4 to regulate flowering time; recruited by SUF4 to FLC promoter.

The protein resides in the nucleus. In terms of biological role, component of the Mediator complex, a coactivator involved in the regulated transcription of nearly all RNA polymerase II-dependent genes. Mediator functions as a bridge to convey information from gene-specific regulatory proteins to the basal RNA polymerase II transcription machinery. The Mediator complex, having a compact conformation in its free form, is recruited to promoters by direct interactions with regulatory proteins and serves for the assembly of a functional pre-initiation complex with RNA polymerase II and the general transcription factors. Involved in the regulation of histone H3 lysine tri-methylation (H3K36me3). Associates with the promoter, coding and terminator regions of target genes suggesting its function in transcription initiation, elongation and termination. Multifunctional protein which regulates plant immunity, especially during necrotrophic fungal infection (e.g. B.cinerea and A.brassicicola), flowering time and responses to hormones (e.g. abscisic acid ABA and ethylene) through interactions with distinct transcription factors. This Arabidopsis thaliana (Mouse-ear cress) protein is Mediator of RNA polymerase II transcription subunit 18.